The primary structure comprises 124 residues: Flowering-promoting factor 1-like protein 1 (124 aa).

The interval 19-42 is disordered; that stretch reads PYNQSAGDSSESSSSGGNQQQRMR. Residues 22-39 are compositionally biased toward low complexity; sequence QSAGDSSESSSSGGNQQQ.

Belongs to the FPF1 family. Expressed in roots, flowers, and at a low level, in leaves.

Functionally, modulates the competence to flowering of apical meristems. In Arabidopsis thaliana (Mouse-ear cress), this protein is Flowering-promoting factor 1-like protein 1 (FLP1).